The sequence spans 401 residues: MAKQKFERTKPHVNVGTIGHVDHGKTTLTAAITKVLALQGAAQFVSYDQIDNAPEERARGITIAIRHVEYQTARRHYAHVDCPGHADYIKNMITGAAQMDGAILVVSAPDGPMPQTREHVLLARQVQVPAMVVFLNKVDMMDDEELLELVELELRELLSNHGFPGDEVPIVRGSALAALSSTSTDINAPEYKCILDLMNAVDEYIPTPVREIDKPFLMPIEDVFGIKGRGTVVTGRIERGKVKMGDTVEIIGMTHEAPRRTVVTGVEMFQKTLDEGIAGDNVGVLLRGIERTEVERGQVLAAPGSIKPHAKFKANVYVLKKEEGGRHTPFFSGYRPQFYIRTTDVTGAIHLPEGVEMVMPGDNIEMTVELIVPVAIEEGLRFAIREGGRTVGAGVVSAIVD.

Residues 10–209 (KPHVNVGTIG…AVDEYIPTPV (200 aa)) enclose the tr-type G domain. A G1 region spans residues 19–26 (GHVDHGKT). 19 to 26 (GHVDHGKT) provides a ligand contact to GTP. Thr-26 is a Mg(2+) binding site. Positions 60-64 (GITIA) are G2. The G3 stretch occupies residues 81–84 (DCPG). GTP is bound by residues 81–85 (DCPGH) and 136–139 (NKVD). Residues 136-139 (NKVD) are G4. Residues 174–176 (SAL) form a G5 region.

It belongs to the TRAFAC class translation factor GTPase superfamily. Classic translation factor GTPase family. EF-Tu/EF-1A subfamily. As to quaternary structure, monomer.

The protein localises to the cytoplasm. It carries out the reaction GTP + H2O = GDP + phosphate + H(+). In terms of biological role, GTP hydrolase that promotes the GTP-dependent binding of aminoacyl-tRNA to the A-site of ribosomes during protein biosynthesis. The protein is Elongation factor Tu 1 of Roseiflexus sp. (strain RS-1).